We begin with the raw amino-acid sequence, 462 residues long: GTPase Der (462 aa).

EngA-type G domains lie at 3–166 and 175–348; these read PVIA…ITEM and IKIA…HSAI. GTP is bound by residues 9 to 16, 56 to 60, 118 to 121, 181 to 188, 228 to 232, and 293 to 296; these read GRPNVGKS, DTGGI, NKTD, DTAGV, and NKWD. Residues 349–433 enclose the KH-like domain; it reads QSFSTPKLTR…PLKIEFKGGQ (85 aa).

The protein belongs to the TRAFAC class TrmE-Era-EngA-EngB-Septin-like GTPase superfamily. EngA (Der) GTPase family. As to quaternary structure, associates with the 50S ribosomal subunit.

Functionally, GTPase that plays an essential role in the late steps of ribosome biogenesis. The protein is GTPase Der of Legionella pneumophila (strain Lens).